A 569-amino-acid polypeptide reads, in one-letter code: Anti-Muellerian hormone type-2 receptor (569 aa).

An N-terminal signal peptide occupies residues 1-17; the sequence is MLGTLGLWALLPAAVQA. Over 18–148 the chain is Extracellular; sequence PPNRRTCVFF…AAPGESPWMA (131 aa). Intrachain disulfides connect Cys-55–Cys-79 and Cys-92–Cys-109. The N-linked (GlcNAc...) asparagine glycan is linked to Asn-66. The N-linked (GlcNAc...) asparagine glycan is linked to Asn-119. A helical transmembrane segment spans residues 149 to 169; it reads LALLGLVLLLLLLLGGIVVAL. Topologically, residues 170–569 are cytoplasmic; sequence LQRKAYRVQS…PGAACASSDV (400 aa). The region spanning 201–511 is the Protein kinase domain; that stretch reads LCFSQVIREG…RLVALVHPQE (311 aa). Residues 207-215 and Lys-228 each bind ATP; that span reads IREGGHAAV. Residue Asp-331 is the Proton acceptor of the active site. Residues 512-535 are disordered; it reads AQPCPEGRPHSHPEDWPPAPAPAP.

This sequence belongs to the protein kinase superfamily. TKL Ser/Thr protein kinase family. TGFB receptor subfamily. As to quaternary structure, interacts with type I receptor ACVR1. It depends on Mg(2+) as a cofactor. Mn(2+) serves as cofactor.

The protein localises to the membrane. The enzyme catalyses L-threonyl-[receptor-protein] + ATP = O-phospho-L-threonyl-[receptor-protein] + ADP + H(+). It catalyses the reaction L-seryl-[receptor-protein] + ATP = O-phospho-L-seryl-[receptor-protein] + ADP + H(+). Functionally, on ligand binding, forms a receptor complex consisting of two type II and two type I transmembrane serine/threonine kinases. Type II receptors phosphorylate and activate type I receptors which autophosphorylate, then bind and activate SMAD transcriptional regulators. Receptor for anti-Muellerian hormone. This is Anti-Muellerian hormone type-2 receptor (AMHR2) from Oryctolagus cuniculus (Rabbit).